Reading from the N-terminus, the 1191-residue chain is Phosphatidylinositol 3,4,5-trisphosphate 5-phosphatase 1 (1191 aa).

Residues 8 to 104 enclose the SH2 domain; the sequence is WNHGNITRSK…GLVTHLQYPV (97 aa). The interval 122-148 is disordered; sequence SVMSPPELPPRNIPMSAGPSEAKDLPL. The SH3-binding 1 motif lies at 127-132; the sequence is PELPPR. Ser246 is subject to Phosphoserine. Positions 915-918 match the NPXY motif 1 motif; sequence NPNY. Tyr918 bears the Phosphotyrosine mark. Ser935 carries the post-translational modification Phosphoserine. A Phosphotyrosine modification is found at Tyr945. Disordered regions lie at residues 947 to 994 and 1021 to 1191; these read QLPK…EARP and YGSV…TAMQ. Over residues 962–972 the composition is skewed to pro residues; that stretch reads PPTPPSQPPLS. The residue at position 964 (Thr964) is a Phosphothreonine. A phosphoserine mark is found at Ser967 and Ser972. Positions 970-975 match the SH3-binding 2 motif; it reads PLSPKK. The tract at residues 1015-1029 is interaction with DAB2; the sequence is MFENPLYGSVSSFPK. The NPXY motif 2 motif lies at 1018–1021; that stretch reads NPLY. The residue at position 1021 (Tyr1021) is a Phosphotyrosine. Residues 1032-1046 show a composition bias toward basic and acidic residues; the sequence is PRKEQESPKMLRKEP. The SH3-binding 3 motif lies at 1039 to 1050; that stretch reads PKMLRKEPPPCP. Residues 1141-1150 are compositionally biased toward pro residues; that stretch reads IPAPRPPLPV. A compositionally biased stretch (basic and acidic residues) spans 1162–1184; that stretch reads KGRDYRDNTELPHHGKHRQEEGL.

The protein belongs to the inositol 1,4,5-trisphosphate 5-phosphatase family. In terms of assembly, interacts with tyrosine phosphorylated form of SHC1. Interacts with tyrosine phosphorylated form of DOK1. Interacts with tyrosine phosphorylated form of DOK3. Interacts with tyrosine phosphorylated form of SLAMF1/CD150. Interacts with PTPN11/SHP-2 in response to IL-3. Interacts with receptor EPOR. Interacts with receptors MS4A2/FCER1B and FCER1G. Interacts with receptors FCGR2B and FCGR3. Interacts with receptor FCGR2A, leading to regulate gene expression during the phagocytic process. Interacts with GRB2. Interacts with PLCG1. Interacts with tyrosine kinases SRC and TEC. Interacts with CRKL. Interacts with c-Met/MET. Interacts with MILR1 (tyrosine-phosphorylated). Isoform 5 interacts with IL6ST/gp130. Can weakly interact (via NPXY motif 2) with DAB2 (via PID domain); the interaction is impaired by tyrosine phosphorylation of the NPXY motif. Interacts (via SH2 domain) with tyrosine phosphorylated KLRC1 (via ITIM). Interacts with MPL/TPOR. Tyrosine phosphorylated by the members of the SRC family after exposure to a diverse array of extracellular stimuli such as cytokines, growth factors, antibodies, chemokines, integrin ligands and hypertonic and oxidative stress. Phosphorylated upon IgG receptor FCGR2B-binding. Specifically expressed in immune and hematopoietic cells. Levels vary considerably within this compartment. Lost during erythropoiesis when erythroid cells become Ter119+. Increases substantially with T-cell maturation and when resting B-cells are activated. Also present in mature granulocytes, monocyte/macrophages, mast cells and platelets. Isoform 5 is the only form expressed in embryonic stem (ES) cells and is coexpressed with other isoforms in hematopoietic stem cells, and disappears with differentiation.

It localises to the cytoplasm. Its subcellular location is the cell membrane. The protein resides in the membrane raft. The protein localises to the cytoskeleton. It carries out the reaction a 1,2-diacyl-sn-glycero-3-phospho-(1D-myo-inositol-3,4,5-trisphosphate) + H2O = a 1,2-diacyl-sn-glycero-3-phospho-(1D-myo-inositol-3,4-bisphosphate) + phosphate. The catalysed reaction is a 1,2-diacyl-sn-glycero-3-phospho-(1D-myo-inositol-4,5-bisphosphate) + H2O = a 1,2-diacyl-sn-glycero-3-phospho-(1D-myo-inositol 4-phosphate) + phosphate. It catalyses the reaction 1D-myo-inositol 1,3,4,5-tetrakisphosphate + H2O = 1D-myo-inositol 1,3,4-trisphosphate + phosphate. With respect to regulation, activated upon translocation to the sites of synthesis of PtdIns(3,4,5)P3 in the membrane. Phosphatidylinositol (PtdIns) phosphatase that specifically hydrolyzes the 5-phosphate of phosphatidylinositol-3,4,5-trisphosphate (PtdIns(3,4,5)P3) to produce PtdIns(3,4)P2, thereby negatively regulating the PI3K (phosphoinositide 3-kinase) pathways. Also able to hydrolyze the 5-phosphate of phosphatidylinositol-4,5-bisphosphate (PtdIns(4,5)P3) and inositol 1,3,4,5-tetrakisphosphate. Acts as a negative regulator of B-cell antigen receptor signaling. Mediates signaling from the FC-gamma-RIIB receptor (FCGR2B), playing a central role in terminating signal transduction from activating immune/hematopoietic cell receptor systems. Acts as a negative regulator of myeloid cell proliferation/survival and chemotaxis, mast cell degranulation, immune cells homeostasis, integrin alpha-IIb/beta-3 signaling in platelets and JNK signaling in B-cells. Regulates proliferation of osteoclast precursors, macrophage programming, phagocytosis and activation and is required for endotoxin tolerance. Involved in the control of cell-cell junctions, CD32a signaling in neutrophils and modulation of EGF-induced phospholipase C activity. Key regulator of neutrophil migration, by governing the formation of the leading edge and polarization required for chemotaxis. Modulates FCGR3/CD16-mediated cytotoxicity in NK cells. Mediates the activin/TGF-beta-induced apoptosis through its Smad-dependent expression. The polypeptide is Phosphatidylinositol 3,4,5-trisphosphate 5-phosphatase 1 (Inpp5d) (Mus musculus (Mouse)).